We begin with the raw amino-acid sequence, 175 residues long: Urease accessory protein UreE (175 aa).

The segment at 134-175 (FQPESGAYGGGHHHGDESATDLHNPGHGPHRSVPKIHEFKPR) is disordered.

Belongs to the UreE family.

The protein localises to the cytoplasm. Functionally, involved in urease metallocenter assembly. Binds nickel. Probably functions as a nickel donor during metallocenter assembly. The polypeptide is Urease accessory protein UreE (Dechloromonas aromatica (strain RCB)).